The primary structure comprises 696 residues: MSQFVLEIGTEELPARFLPALERELAERFTRALADAGIECDPVRVMSTPRRAVVRMDAVNPVQSESEEVVTGPPARIAFTPEGGLTKAAEGFARTQGVEVADIFRLTTDKGEYIAVRKHMGGARSIDLLRDICPAIIGALPFPKRMRWGSGDFTYARPMRWLLALFDESVVDFEVGGVRSGNITYGHRIHGAGPLTVARAGDYERVIREQGGVTPVGEERRNAVVKGGNALAVAAGGKVIWKDSLLDEVQGLVEHPVPCLGNIDPSFLELPREVLLTSMESHQKSFGVEDAEGRLMPHFLTVLNLTPLDGDLVRKGWERVLRARLEDARFFWKTDLASSFDAWLASLDNVIFLGPLGSMGDKTRRLEQLCAWLAAEVGFDDATAAARAGRLSKGDLVSGMVGEFDTLQGIMGGIYARRMGEAEAVAAAIAEQYLPAGPDSPVPSSMCGALLSIADKADTLAGCFGLGMIPTGAADPYALRRCVLGIARIILEHGLQLDVRGLFAKAFALYGERAWKLAPEDALVKLDEFFMARLRNLFIANGYETLLVEAVLAAGCDDVRSAGARLEALAAFSRRDDFASAVLTFKRAANIIRKQGGDSDVALDGAWKADLLVEDAERQLAASLEAMFPRFDGLWAEGDYPALFGLLGELRPVVDGFFEGVMVMSDDAALRTNRLNLLQALVGRLSRLADFGALQM.

It belongs to the class-II aminoacyl-tRNA synthetase family. Tetramer of two alpha and two beta subunits.

Its subcellular location is the cytoplasm. It catalyses the reaction tRNA(Gly) + glycine + ATP = glycyl-tRNA(Gly) + AMP + diphosphate. This Nitratidesulfovibrio vulgaris (strain ATCC 29579 / DSM 644 / CCUG 34227 / NCIMB 8303 / VKM B-1760 / Hildenborough) (Desulfovibrio vulgaris) protein is Glycine--tRNA ligase beta subunit.